The chain runs to 303 residues: N-acetyl-D-glucosamine kinase (303 aa).

ATP contacts are provided by residues 4-11 and 133-140; these read GFDIGGTK and GVGGGLIF. Zn(2+) is bound by residues His-157, Cys-177, Cys-179, and Cys-184.

The protein belongs to the ROK (NagC/XylR) family. NagK subfamily.

It catalyses the reaction N-acetyl-D-glucosamine + ATP = N-acetyl-D-glucosamine 6-phosphate + ADP + H(+). It functions in the pathway cell wall biogenesis; peptidoglycan recycling. Its function is as follows. Catalyzes the phosphorylation of N-acetyl-D-glucosamine (GlcNAc) derived from cell-wall degradation, yielding GlcNAc-6-P. This is N-acetyl-D-glucosamine kinase from Escherichia coli O127:H6 (strain E2348/69 / EPEC).